Consider the following 175-residue polypeptide: ADP-ribosylation factor 6 (175 aa).

A lipid anchor (N-myristoyl glycine) is attached at glycine 2. The N6-myristoyl lysine moiety is linked to residue lysine 3. GTP contacts are provided by residues 23–28 (AAGKTT), 41–44 (TIPT), 63–67 (DVGGQ), 122–125 (NKQD), and 155–156 (CA).

The protein belongs to the small GTPase superfamily. Arf family. Interacts (when activated) with GGA1, GGA2 and GGA3; the interaction is required for proper subcellular location of GGA1, GGA2 and GGA3. Interacts with PIP5K1C. Interacts with USP6 (via Rab-GAP TBC domain). Interacts with RAB11FIP3 and RAB11FIP4. Interacts with HERC1. Interacts with ARHGAP21. Interacts with ASAP3; the interaction is stabilized by calcium ions. Interacts with NCS1/FREQ at the plasma membrane. Interacts with TBC1D24. Interacts with ECPAS. Interacts with MICALL1. Interacts with SPAG9 homodimers, forming heterotetramers. Interacts with CYTH3. Interacts with ASAP2. Interacts with UACA. Interacts with KIF23, forming heterodimers and heterotetramers. Interacts with C9orf72. Interacts (GTP-bound form) with TJAP1/PILT. Interacts with PRKAA2. Interacts with CD36 (when palmitoylated); this interaction mediates CD36 transport from the Golgi to the plasma membrane. Interacts with APBB1. As to quaternary structure, (Microbial infection) Interacts with the V.cholerae enterotoxin subunit A1; this causes a conformation change so that the toxin can bind NAD and catalyze the ADP-ribosylation of Gs alpha. In terms of assembly, (Microbial infection) Interacts with EspG from enteropathogenic E.coli. (Microbial infection) Identified in a complex with RAB1A and EspG from enteropathogenic E.coli. As to quaternary structure, (Microbial infection) Interacts with human enterovirus 71 protein VP1. GTP-bound form is myristoylated on Lys-3 by NMT1 and NMT2, allowing ARF6 to remain on membranes during the GTPase cycle, thereby promoting its activity. GDP-bound inactive form is demyristoylated on Lys-3 by SIRT2 at early endosomes or endocytic recycling compartment to allow its efficient activation by a guanine exchange factor (GEF) after GDP release. Ubiquitous, with higher levels in heart, substantia nigra, and kidney.

It localises to the cytoplasm. It is found in the cytosol. The protein localises to the cell membrane. Its subcellular location is the endosome membrane. The protein resides in the recycling endosome membrane. It localises to the cell projection. It is found in the filopodium membrane. The protein localises to the ruffle. Its subcellular location is the cleavage furrow. The protein resides in the midbody. It localises to the midbody ring. It is found in the early endosome membrane. The protein localises to the golgi apparatus. Its subcellular location is the trans-Golgi network membrane. The enzyme catalyses GTP + H2O = GDP + phosphate + H(+). Its activity is regulated as follows. Activation is generally mediated by a guanine exchange factor (GEF), while inactivation through hydrolysis of bound GTP is catalyzed by a GTPase activating protein (GAP). Activated by ASAP3. Inactivated by ACAP1 and ACAP2. Activated by NGF via NTRK1. Activated by PRKAA2 through its C-terminal regulatory domain. Functionally, GTP-binding protein involved in protein trafficking that regulates endocytic recycling and cytoskeleton remodeling. GTP-bound form plays an important role in the transport of multiple palmitoylated proteins form the Golgi to the plasma membrane. Required for normal completion of mitotic cytokinesis. Plays a role in the reorganization of the actin cytoskeleton and the formation of stress fibers. Involved in the regulation of dendritic spine development, contributing to the regulation of dendritic branching and filopodia extension. Potentiates the neurite outgrowth in primary neurons by interacting with the molecular adapter APBB1. Plays an important role in membrane trafficking, during junctional remodeling and epithelial polarization. Regulates surface levels of adherens junction proteins such as CDH1. Required for NTRK1 sorting to the recycling pathway from early endosomes. (Microbial infection) Functions as an allosteric activator of the cholera toxin catalytic subunit, an ADP-ribosyltransferase. Its function is as follows. (Microbial infection) Plays a key role in the endocytosis of enterovirus 71 and thus viral entry into brain microvascular endothelial cells. The chain is ADP-ribosylation factor 6 from Homo sapiens (Human).